We begin with the raw amino-acid sequence, 161 residues long: Phosphopantetheine adenylyltransferase (161 aa).

Residue Ser9 coordinates substrate. Residues 9 to 10 (SF) and His17 each bind ATP. The substrate site is built by Lys41, Thr73, and Arg87. Residues 88–90 (GIR), Glu98, and 123–129 (YQYVSSS) contribute to the ATP site.

Belongs to the bacterial CoaD family. In terms of assembly, homohexamer. Mg(2+) is required as a cofactor.

It localises to the cytoplasm. The enzyme catalyses (R)-4'-phosphopantetheine + ATP + H(+) = 3'-dephospho-CoA + diphosphate. It functions in the pathway cofactor biosynthesis; coenzyme A biosynthesis; CoA from (R)-pantothenate: step 4/5. In terms of biological role, reversibly transfers an adenylyl group from ATP to 4'-phosphopantetheine, yielding dephospho-CoA (dPCoA) and pyrophosphate. This chain is Phosphopantetheine adenylyltransferase, found in Levilactobacillus brevis (strain ATCC 367 / BCRC 12310 / CIP 105137 / JCM 1170 / LMG 11437 / NCIMB 947 / NCTC 947) (Lactobacillus brevis).